The chain runs to 772 residues: Chondroitin sulfate glucuronyltransferase (772 aa).

Residues 1–6 (MRLSSL) are Cytoplasmic-facing. The chain crosses the membrane as a helical; Signal-anchor for type II membrane protein span at residues 7 to 29 (LALLRPALPLILGLSLGCSLSLL). Over 30 to 772 (RVSWIQGEGE…LFEQEQANST (743 aa)) the chain is Lumenal. 2 N-linked (GlcNAc...) asparagine glycosylation sites follow: N121 and N342. A disordered region spans residues 629 to 662 (ALSPQRSPPGPPGAGPDPPSPPGADPSRGAPIGG). Positions 634–652 (RSPPGPPGAGPDPPSPPGA) are enriched in pro residues.

Belongs to the chondroitin N-acetylgalactosaminyltransferase family. In terms of tissue distribution, ubiquitous. Highly expressed in placenta, small intestine and pancreas.

Its subcellular location is the golgi apparatus. It is found in the golgi stack membrane. The catalysed reaction is 3-O-(beta-D-GalNAc-(1-&gt;4)-beta-D-GlcA-(1-&gt;3)-beta-D-Gal-(1-&gt;3)-beta-D-Gal-(1-&gt;4)-beta-D-Xyl)-L-seryl-[protein] + UDP-alpha-D-glucuronate = 3-O-(beta-D-GlcA-(1-&gt;3)-beta-D-GalNAc-(1-&gt;4)-beta-D-GlcA-(1-&gt;3)-beta-D-Gal-(1-&gt;3)-beta-D-Gal-(1-&gt;4)-beta-D-Xyl)-L-seryl-[protein] + UDP + H(+). It carries out the reaction 3-O-{[beta-D-GalNAc-(1-&gt;4)-beta-D-GlcA-(1-&gt;3)](n)-beta-D-GalNAc-(1-&gt;4)-beta-D-GlcA-(1-&gt;3)-beta-D-Gal-(1-&gt;3)-beta-D-Gal-(1-&gt;4)-beta-D-Xyl}-L-seryl-[protein] + UDP-alpha-D-glucuronate = 3-O-{beta-D-GlcA-(1-&gt;3)-[beta-D-GalNAc-(1-&gt;4)-beta-D-GlcA-(1-&gt;3)](n)-beta-D-GalNAc-(1-&gt;4)-beta-D-GlcA-(1-&gt;3)-beta-D-Gal-(1-&gt;3)-beta-D-Gal-(1-&gt;4)-beta-D-Xyl}-L-seryl-[protein] + UDP + H(+). Functionally, transfers glucuronic acid (GlcUA) from UDP-GlcUA to N-acetylgalactosamine residues on the non-reducing end of the elongating chondroitin polymer. Has no N-acetylgalactosaminyltransferase activity. This Homo sapiens (Human) protein is Chondroitin sulfate glucuronyltransferase (CHPF2).